The chain runs to 165 residues: Zinc finger C2H2 protein ECU11_0990 (165 aa).

2 stretches are compositionally biased toward basic and acidic residues: residues 1–10 (MEAESPKERV) and 19–32 (DPER…DTSS). Residues 1-38 (MEAESPKERVQGVSGESWDPERGVKEREDTSSKKGKGV) form a disordered region. 2 C2H2-type zinc fingers span residues 103 to 125 (FGCE…KAQH) and 136 to 158 (LFCP…SRYH).

The chain is Zinc finger C2H2 protein ECU11_0990 from Encephalitozoon cuniculi (strain GB-M1) (Microsporidian parasite).